Here is a 605-residue protein sequence, read N- to C-terminus: DNA primase (605 aa).

The CHC2-type zinc-finger motif lies at 38–62 (CPFHDEKTPSFTVSEDKQICHCFGC). Residues 260–341 (DEIVLLEGFM…NVFVIQLPSG (82 aa)) form the Toprim domain. Mg(2+) is bound by residues glutamate 266, aspartate 310, and aspartate 312.

Belongs to the DnaG primase family. As to quaternary structure, monomer. Interacts with DnaB. Zn(2+) serves as cofactor. It depends on Mg(2+) as a cofactor.

It carries out the reaction ssDNA + n NTP = ssDNA/pppN(pN)n-1 hybrid + (n-1) diphosphate.. Functionally, RNA polymerase that catalyzes the synthesis of short RNA molecules used as primers for DNA polymerase during DNA replication. This is DNA primase from Staphylococcus aureus (strain MSSA476).